Reading from the N-terminus, the 683-residue chain is Acetyl-coenzyme A synthetase 2 (683 aa).

Residues 207-210 (RGGK) and Thr326 contribute to the CoA site. ATP contacts are provided by residues 402–404 (GEP), 426–431 (DTFWQT), Asp517, and Arg532. Ser540 provides a ligand contact to CoA. Residue Arg543 participates in ATP binding. Arg613 is a CoA binding site.

Belongs to the ATP-dependent AMP-binding enzyme family.

The catalysed reaction is acetate + ATP + CoA = acetyl-CoA + AMP + diphosphate. The protein is Acetyl-coenzyme A synthetase 2 (ACS2) of Candida glabrata (strain ATCC 2001 / BCRC 20586 / JCM 3761 / NBRC 0622 / NRRL Y-65 / CBS 138) (Yeast).